Reading from the N-terminus, the 217-residue chain is Probable GTP-binding protein EngB (217 aa).

Positions 37–214 constitute an EngB-type G domain; it reads AGIEVAFAGR…RAAMIRLLDE (178 aa). GTP contacts are provided by residues 45-52, 72-76, 92-95, 159-162, and 193-195; these read GRSNVGKS, GRTQE, DMPG, TKAD, and TSS. Mg(2+)-binding residues include Ser-52 and Thr-74.

It belongs to the TRAFAC class TrmE-Era-EngA-EngB-Septin-like GTPase superfamily. EngB GTPase family. Mg(2+) serves as cofactor.

Necessary for normal cell division and for the maintenance of normal septation. The polypeptide is Probable GTP-binding protein EngB (Rhodopseudomonas palustris (strain BisB5)).